We begin with the raw amino-acid sequence, 320 residues long: Olfactory receptor 2W1 (320 aa).

Residues M1–M25 lie on the Extracellular side of the membrane. The N-linked (GlcNAc...) asparagine glycan is linked to N5. The chain crosses the membrane as a helical span at residues I26–S49. Residues L50–T57 are Cytoplasmic-facing. Residues P58 to P79 form a helical membrane-spanning segment. The Extracellular segment spans residues Q80–Q100. A disulfide bridge connects residues C97 and C189. Residues L101–Y120 form a helical membrane-spanning segment. Over D121 to H139 the chain is Cytoplasmic. The helical transmembrane segment at L140 to V158 threads the bilayer. Topologically, residues L159–V195 are extracellular. Residues E196–G219 form a helical membrane-spanning segment. The Cytoplasmic segment spans residues Y220–K236. The helical transmembrane segment at A237 to Y259 threads the bilayer. At L260–K272 the chain is on the extracellular side. Residues F273–L292 form a helical membrane-spanning segment. Topologically, residues R293–S320 are cytoplasmic.

Belongs to the G-protein coupled receptor 1 family.

It localises to the cell membrane. In terms of biological role, odorant receptor. The chain is Olfactory receptor 2W1 (OR2W1) from Homo sapiens (Human).